The primary structure comprises 452 residues: Bifunctional protein GlmU (452 aa).

Residues 1–226 (MNFSAVILAA…PIEVEGVNDR (226 aa)) form a pyrophosphorylase region. UDP-N-acetyl-alpha-D-glucosamine-binding positions include 8-11 (LAAG), lysine 22, glutamine 73, 78-79 (GT), 100-102 (YGD), glycine 137, glutamate 151, asparagine 166, and asparagine 224. A Mg(2+)-binding site is contributed by aspartate 102. Residue asparagine 224 coordinates Mg(2+). Positions 227-247 (AQLARLERAYQAAQAQKLLEQ) are linker. The segment at 248-452 (GVMLRDPSRF…IANWQRPTKK (205 aa)) is N-acetyltransferase. UDP-N-acetyl-alpha-D-glucosamine-binding residues include arginine 330 and lysine 348. Histidine 360 functions as the Proton acceptor in the catalytic mechanism. UDP-N-acetyl-alpha-D-glucosamine contacts are provided by tyrosine 363 and asparagine 374. Residues alanine 377, 383 to 384 (NY), serine 402, alanine 420, and arginine 437 contribute to the acetyl-CoA site.

This sequence in the N-terminal section; belongs to the N-acetylglucosamine-1-phosphate uridyltransferase family. The protein in the C-terminal section; belongs to the transferase hexapeptide repeat family. In terms of assembly, homotrimer. Requires Mg(2+) as cofactor.

It is found in the cytoplasm. The catalysed reaction is alpha-D-glucosamine 1-phosphate + acetyl-CoA = N-acetyl-alpha-D-glucosamine 1-phosphate + CoA + H(+). It carries out the reaction N-acetyl-alpha-D-glucosamine 1-phosphate + UTP + H(+) = UDP-N-acetyl-alpha-D-glucosamine + diphosphate. Its pathway is nucleotide-sugar biosynthesis; UDP-N-acetyl-alpha-D-glucosamine biosynthesis; N-acetyl-alpha-D-glucosamine 1-phosphate from alpha-D-glucosamine 6-phosphate (route II): step 2/2. It functions in the pathway nucleotide-sugar biosynthesis; UDP-N-acetyl-alpha-D-glucosamine biosynthesis; UDP-N-acetyl-alpha-D-glucosamine from N-acetyl-alpha-D-glucosamine 1-phosphate: step 1/1. The protein operates within bacterial outer membrane biogenesis; LPS lipid A biosynthesis. Functionally, catalyzes the last two sequential reactions in the de novo biosynthetic pathway for UDP-N-acetylglucosamine (UDP-GlcNAc). The C-terminal domain catalyzes the transfer of acetyl group from acetyl coenzyme A to glucosamine-1-phosphate (GlcN-1-P) to produce N-acetylglucosamine-1-phosphate (GlcNAc-1-P), which is converted into UDP-GlcNAc by the transfer of uridine 5-monophosphate (from uridine 5-triphosphate), a reaction catalyzed by the N-terminal domain. In Aliivibrio fischeri (strain MJ11) (Vibrio fischeri), this protein is Bifunctional protein GlmU.